Consider the following 321-residue polypeptide: MATH domain and coiled-coil domain-containing protein At3g58260 (321 aa).

An MATH domain is found at 6 to 135 (NNTFTWVIKN…NDEVMVAVAV (130 aa)). The stretch at 232-283 (KLDWLEKKLDELFEKKKEEADKIRMQNIEEELKDLRQKCSSLEALLKKEKTG) forms a coiled coil.

This is MATH domain and coiled-coil domain-containing protein At3g58260 from Arabidopsis thaliana (Mouse-ear cress).